A 582-amino-acid chain; its full sequence is UPF0329 protein ECU07_0070 (582 aa).

Residues 326–386 (EEKAKSKKKG…KTGKKSKGDQ (61 aa)) are disordered. Residues 330–339 (KSKKKGKKKS) show a composition bias toward basic residues. Residues 344-354 (EAKEEEKKESG) are compositionally biased toward basic and acidic residues.

The protein belongs to the UPF0329 family.

The polypeptide is UPF0329 protein ECU07_0070 (Encephalitozoon cuniculi (strain GB-M1) (Microsporidian parasite)).